A 267-amino-acid polypeptide reads, in one-letter code: 2-keto-3-deoxy-L-rhamnonate aldolase (267 aa).

The active-site Proton acceptor is the His49. Gln151 contacts substrate. Glu153 is a Mg(2+) binding site. Substrate contacts are provided by Ala178 and Asp179. Mg(2+) is bound at residue Asp179.

The protein belongs to the HpcH/HpaI aldolase family. KDR aldolase subfamily. As to quaternary structure, homohexamer. Requires Mg(2+) as cofactor.

It carries out the reaction 2-dehydro-3-deoxy-L-rhamnonate = (S)-lactaldehyde + pyruvate. Catalyzes the reversible retro-aldol cleavage of 2-keto-3-deoxy-L-rhamnonate (KDR) to pyruvate and lactaldehyde. This is 2-keto-3-deoxy-L-rhamnonate aldolase from Shigella boydii serotype 4 (strain Sb227).